The following is a 206-amino-acid chain: FMN-dependent NADH:quinone oxidoreductase 1 (206 aa).

Residues Ser10 and 16 to 18 each bind FMN; that span reads SLS.

The protein belongs to the azoreductase type 1 family. As to quaternary structure, homodimer. Requires FMN as cofactor.

The catalysed reaction is 2 a quinone + NADH + H(+) = 2 a 1,4-benzosemiquinone + NAD(+). The enzyme catalyses N,N-dimethyl-1,4-phenylenediamine + anthranilate + 2 NAD(+) = 2-(4-dimethylaminophenyl)diazenylbenzoate + 2 NADH + 2 H(+). Functionally, quinone reductase that provides resistance to thiol-specific stress caused by electrophilic quinones. Also exhibits azoreductase activity. Catalyzes the reductive cleavage of the azo bond in aromatic azo compounds to the corresponding amines. The polypeptide is FMN-dependent NADH:quinone oxidoreductase 1 (Burkholderia lata (strain ATCC 17760 / DSM 23089 / LMG 22485 / NCIMB 9086 / R18194 / 383)).